Consider the following 122-residue polypeptide: Large ribosomal subunit protein uL14 (122 aa).

It belongs to the universal ribosomal protein uL14 family. Part of the 50S ribosomal subunit. Forms a cluster with proteins L3 and L19. In the 70S ribosome, L14 and L19 interact and together make contacts with the 16S rRNA in bridges B5 and B8.

Its function is as follows. Binds to 23S rRNA. Forms part of two intersubunit bridges in the 70S ribosome. This is Large ribosomal subunit protein uL14 from Parafrankia sp. (strain EAN1pec).